Consider the following 914-residue polypeptide: Alanine--tRNA ligase (914 aa).

The Zn(2+) site is built by histidine 608, histidine 612, cysteine 711, and histidine 715.

This sequence belongs to the class-II aminoacyl-tRNA synthetase family. Requires Zn(2+) as cofactor.

The protein localises to the cytoplasm. The enzyme catalyses tRNA(Ala) + L-alanine + ATP = L-alanyl-tRNA(Ala) + AMP + diphosphate. In terms of biological role, catalyzes the attachment of alanine to tRNA(Ala) in a two-step reaction: alanine is first activated by ATP to form Ala-AMP and then transferred to the acceptor end of tRNA(Ala). Also edits incorrectly charged Ser-tRNA(Ala) and Gly-tRNA(Ala) via its editing domain. This chain is Alanine--tRNA ligase, found in Methanoregula boonei (strain DSM 21154 / JCM 14090 / 6A8).